The chain runs to 418 residues: Inner capsid protein sigma-2 (418 aa).

It belongs to the orthoreovirus sigma-1 protein family. In terms of assembly, interacts with protein mu-NS; in viral inclusions.

Its subcellular location is the virion. In terms of biological role, inner capsid (core) component. The protein is Inner capsid protein sigma-2 (S2) of Mammalia (T1L).